The sequence spans 469 residues: Trigger factor (469 aa).

The region spanning 162–243 (GDFVSIDLSA…VKSVKERELP (82 aa)) is the PPIase FKBP-type domain. Positions 429-469 (NTIDTSEFFGKHAQSDKADQKTEEADPNSDAIDEEVDEAAE) are disordered. The span at 437–452 (FGKHAQSDKADQKTEE) shows a compositional bias: basic and acidic residues. Positions 453-469 (ADPNSDAIDEEVDEAAE) are enriched in acidic residues.

It belongs to the FKBP-type PPIase family. Tig subfamily.

Its subcellular location is the cytoplasm. It carries out the reaction [protein]-peptidylproline (omega=180) = [protein]-peptidylproline (omega=0). In terms of biological role, involved in protein export. Acts as a chaperone by maintaining the newly synthesized protein in an open conformation. Functions as a peptidyl-prolyl cis-trans isomerase. The chain is Trigger factor from Mycobacterium leprae (strain Br4923).